Reading from the N-terminus, the 143-residue chain is Mite group 2 allergen Pso o 2 (143 aa).

An N-terminal signal peptide occupies residues 1-17; that stretch reads MMKTLVVLAITLAVVSA. 3 cysteine pairs are disulfide-bonded: Cys25-Cys134, Cys38-Cys43, and Cys89-Cys94.

This sequence belongs to the NPC2 family.

It is found in the secreted. The protein is Mite group 2 allergen Pso o 2 (ALLA) of Psoroptes ovis (Sheep scab mite).